Consider the following 401-residue polypeptide: G2/mitotic-specific cyclin-B1 (401 aa).

Disordered stretches follow at residues 1 to 30 and 84 to 103; these read MALR…PTLK and KVQV…ETSG. Positions 9-26 are enriched in polar residues; it reads RLASTRAEQGGKTCSVSG.

It belongs to the cyclin family. Cyclin AB subfamily. In terms of assembly, interacts with the CDK1 protein kinase to form a serine/threonine kinase holoenzyme complex also known as maturation promoting factor (MPF). The cyclin subunit imparts substrate specificity to the complex.

Functionally, essential for the control of the cell cycle at the G2/M (mitosis) transition. This chain is G2/mitotic-specific cyclin-B1 (ccnb1), found in Oryzias javanicus (Javanese ricefish).